Reading from the N-terminus, the 383-residue chain is ATP phosphoribosyltransferase regulatory subunit (383 aa).

This sequence belongs to the class-II aminoacyl-tRNA synthetase family. HisZ subfamily. Heteromultimer composed of HisG and HisZ subunits.

It is found in the cytoplasm. The protein operates within amino-acid biosynthesis; L-histidine biosynthesis; L-histidine from 5-phospho-alpha-D-ribose 1-diphosphate: step 1/9. Its function is as follows. Required for the first step of histidine biosynthesis. May allow the feedback regulation of ATP phosphoribosyltransferase activity by histidine. This chain is ATP phosphoribosyltransferase regulatory subunit, found in Paraburkholderia phytofirmans (strain DSM 17436 / LMG 22146 / PsJN) (Burkholderia phytofirmans).